A 556-amino-acid chain; its full sequence is 2-isopropylmalate synthase (556 aa).

Positions 33-307 (PIWCSSDLRD…HPQLDFSDID (275 aa)) constitute a Pyruvate carboxyltransferase domain. Mg(2+) contacts are provided by D42, H246, H248, and N282. Residues 439 to 556 (ATSPYVLASH…AVTQAEAKAA (118 aa)) form a regulatory domain region.

It belongs to the alpha-IPM synthase/homocitrate synthase family. LeuA type 2 subfamily. In terms of assembly, homodimer. Requires Mg(2+) as cofactor.

Its subcellular location is the cytoplasm. The catalysed reaction is 3-methyl-2-oxobutanoate + acetyl-CoA + H2O = (2S)-2-isopropylmalate + CoA + H(+). Its pathway is amino-acid biosynthesis; L-leucine biosynthesis; L-leucine from 3-methyl-2-oxobutanoate: step 1/4. Its function is as follows. Catalyzes the condensation of the acetyl group of acetyl-CoA with 3-methyl-2-oxobutanoate (2-ketoisovalerate) to form 3-carboxy-3-hydroxy-4-methylpentanoate (2-isopropylmalate). The protein is 2-isopropylmalate synthase of Pseudomonas aeruginosa (strain ATCC 15692 / DSM 22644 / CIP 104116 / JCM 14847 / LMG 12228 / 1C / PRS 101 / PAO1).